A 237-amino-acid chain; its full sequence is Ribosomal RNA small subunit methyltransferase G (237 aa).

Residues Gly78, Phe83, 129 to 130, and Arg148 each bind S-adenosyl-L-methionine; that span reads AE.

This sequence belongs to the methyltransferase superfamily. RNA methyltransferase RsmG family.

The protein localises to the cytoplasm. Its function is as follows. Specifically methylates the N7 position of a guanine in 16S rRNA. The sequence is that of Ribosomal RNA small subunit methyltransferase G from Streptococcus pyogenes serotype M49 (strain NZ131).